The following is a 360-amino-acid chain: Sensor histidine kinase LiaS (360 aa).

Over 1–15 the chain is Cytoplasmic; the sequence is MRKKMLASLQWRAIR. A helical membrane pass occupies residues 16-36; the sequence is MTTGISLLLFVCLISFMMFYY. At 37–47 the chain is on the extracellular side; that stretch reads RLDPLVLLSSS. The chain crosses the membrane as a helical span at residues 48 to 68; that stretch reads WFGIPFILILLLISVTVGFAS. At 69–360 the chain is on the cytoplasmic side; that stretch reads GYMYGNRLKT…ENERDSSIID (292 aa). The region spanning 74-126 is the HAMP domain; the sequence is NRLKTRIDTLIESILTFENGNFAYRIPPLGDDEIGLAADQLNEMAKRVELQVA. Residues 153–346 form the Histidine kinase domain; the sequence is RLARDLHDAV…QIEVKVPIFP (194 aa). H159 bears the Phosphohistidine; by autocatalysis mark.

It is found in the cell membrane. It catalyses the reaction ATP + protein L-histidine = ADP + protein N-phospho-L-histidine.. In terms of biological role, member of the two-component regulatory system LiaS/LiaR probably involved in response to a subset of cell wall-active antibiotics that interfere with the lipid II cycle in the cytoplasmic membrane (bacitracin, nisin, ramoplanin and vancomycin). Also seems to be involved in response to cationic antimicrobial peptides and secretion stress. Activates probably LiaR by phosphorylation. This is Sensor histidine kinase LiaS (liaS) from Bacillus subtilis (strain 168).